Consider the following 496-residue polypeptide: DEAD-box ATP-dependent RNA helicase 38 (496 aa).

A disordered region spans residues 1 to 91 (MADTVEKVPT…SGDTPYTSAS (91 aa)). At A2 the chain carries N-acetylalanine. Positions 7–25 (KVPTVVESSSSSTVEASNS) are enriched in low complexity. Residues 27 to 40 (EKTEPTTEKKKWGD) are compositionally biased toward basic and acidic residues. The segment covering 41–51 (VEDDDDEEEAV) has biased composition (acidic residues). Positions 78-91 (KAVTSGDTPYTSAS) are enriched in polar residues. The Q motif signature appears at 91 to 120 (SRFEDLNLSPELMKGLYVEMKFEKPSKIQA). Residues 125–301 (MIMTPPHKHL…ARTVKDPNQL (177 aa)) form the Helicase ATP-binding domain. Residue 138–145 (AHNGSGKT) participates in ATP binding. Positions 245-248 (DEAD) match the DEAD box motif. The 155-residue stretch at 329–483 (VIKDQIMELG…EIKSWNSEEE (155 aa)) folds into the Helicase C-terminal domain.

Belongs to the DEAD box helicase family. DDX19/DBP5 subfamily. Interacts with NUP214 (via N-terminus). Constitutively expressed.

The protein resides in the cytoplasm. Its subcellular location is the nucleus. The catalysed reaction is ATP + H2O = ADP + phosphate + H(+). Its function is as follows. ATP-dependent RNA helicase essential for mRNA export from the nucleus. Plays an important role in the positive regulation of CBF/DREB transcription factors. This is DEAD-box ATP-dependent RNA helicase 38 (RH38) from Arabidopsis thaliana (Mouse-ear cress).